The following is a 173-amino-acid chain: ATP-dependent protease subunit HslV (173 aa).

Threonine 2 is an active-site residue. Glycine 158, aspartate 161, and serine 164 together coordinate Na(+).

This sequence belongs to the peptidase T1B family. HslV subfamily. A double ring-shaped homohexamer of HslV is capped on each side by a ring-shaped HslU homohexamer. The assembly of the HslU/HslV complex is dependent on binding of ATP.

It localises to the cytoplasm. It carries out the reaction ATP-dependent cleavage of peptide bonds with broad specificity.. With respect to regulation, allosterically activated by HslU binding. In terms of biological role, protease subunit of a proteasome-like degradation complex believed to be a general protein degrading machinery. This is ATP-dependent protease subunit HslV from Glaesserella parasuis serovar 5 (strain SH0165) (Haemophilus parasuis).